The following is a 201-amino-acid chain: Glycerol-3-phosphate acyltransferase (201 aa).

The next 6 helical transmembrane spans lie at Met-10–Leu-30, Leu-60–Ala-80, Ala-86–Phe-106, Leu-116–Val-136, Leu-139–Leu-159, and Ala-166–Ile-186.

It belongs to the PlsY family. Probably interacts with PlsX.

The protein localises to the cell inner membrane. It catalyses the reaction an acyl phosphate + sn-glycerol 3-phosphate = a 1-acyl-sn-glycero-3-phosphate + phosphate. It participates in lipid metabolism; phospholipid metabolism. Its function is as follows. Catalyzes the transfer of an acyl group from acyl-phosphate (acyl-PO(4)) to glycerol-3-phosphate (G3P) to form lysophosphatidic acid (LPA). This enzyme utilizes acyl-phosphate as fatty acyl donor, but not acyl-CoA or acyl-ACP. The protein is Glycerol-3-phosphate acyltransferase of Brucella ovis (strain ATCC 25840 / 63/290 / NCTC 10512).